Reading from the N-terminus, the 407-residue chain is Peptidase T (407 aa).

His81 is a Zn(2+) binding site. The active site involves Asp83. Asp142 contacts Zn(2+). Glu176 functions as the Proton acceptor in the catalytic mechanism. Residues Glu177, Asp199, and His381 each contribute to the Zn(2+) site.

Belongs to the peptidase M20B family. It depends on Zn(2+) as a cofactor.

The protein localises to the cytoplasm. It catalyses the reaction Release of the N-terminal residue from a tripeptide.. Functionally, cleaves the N-terminal amino acid of tripeptides. This chain is Peptidase T, found in Streptococcus pneumoniae (strain Taiwan19F-14).